Reading from the N-terminus, the 216-residue chain is NADH dehydrogenase [ubiquinone] iron-sulfur protein 7, mitochondrial (216 aa).

Residues 1–37 (MAALAALRLLHPILAVRSGVGAALQVRGVHSSMAADS) constitute a mitochondrion transit peptide. The [4Fe-4S] cluster site is built by Cys91 and Cys92. At Arg114 the chain carries Hydroxyarginine. [4Fe-4S] cluster-binding residues include Cys156 and Cys186.

The protein belongs to the complex I 20 kDa subunit family. As to quaternary structure, core subunit of respiratory chain NADH dehydrogenase (Complex I) which is composed of 45 different subunits. This is a component of the iron-sulfur (IP) fragment of the enzyme. It depends on [4Fe-4S] cluster as a cofactor. Hydroxylated ar Arg-114 by NDUFAF5 early in the pathway of assembly of complex I, before the formation of the juncture between peripheral and membrane arms.

The protein resides in the mitochondrion inner membrane. The enzyme catalyses a ubiquinone + NADH + 5 H(+)(in) = a ubiquinol + NAD(+) + 4 H(+)(out). Its function is as follows. Core subunit of the mitochondrial membrane respiratory chain NADH dehydrogenase (Complex I) which catalyzes electron transfer from NADH through the respiratory chain, using ubiquinone as an electron acceptor. Essential for the catalytic activity of complex I. The protein is NADH dehydrogenase [ubiquinone] iron-sulfur protein 7, mitochondrial (NDUFS7) of Bos taurus (Bovine).